The chain runs to 453 residues: Pup--protein ligase (453 aa).

A Mg(2+)-binding site is contributed by Glu-9. Arg-53 is a binding site for ATP. Position 55 (Tyr-55) interacts with Mg(2+). Residue Asp-57 is the Proton acceptor of the active site. Glu-63 is a Mg(2+) binding site. Positions 66 and 420 each coordinate ATP.

It belongs to the Pup ligase/Pup deamidase family. Pup-conjugating enzyme subfamily.

The catalysed reaction is ATP + [prokaryotic ubiquitin-like protein]-L-glutamate + [protein]-L-lysine = ADP + phosphate + N(6)-([prokaryotic ubiquitin-like protein]-gamma-L-glutamyl)-[protein]-L-lysine.. It participates in protein degradation; proteasomal Pup-dependent pathway. The protein operates within protein modification; protein pupylation. In terms of biological role, catalyzes the covalent attachment of the prokaryotic ubiquitin-like protein modifier Pup to the proteasomal substrate proteins, thereby targeting them for proteasomal degradation. This tagging system is termed pupylation. The ligation reaction involves the side-chain carboxylate of the C-terminal glutamate of Pup and the side-chain amino group of a substrate lysine. This Streptomyces griseus subsp. griseus (strain JCM 4626 / CBS 651.72 / NBRC 13350 / KCC S-0626 / ISP 5235) protein is Pup--protein ligase.